The primary structure comprises 194 residues: Fe/S biogenesis protein NfuA (194 aa).

The [4Fe-4S] cluster site is built by C152 and C155.

This sequence belongs to the NfuA family. As to quaternary structure, homodimer. [4Fe-4S] cluster is required as a cofactor.

Functionally, involved in iron-sulfur cluster biogenesis. Binds a 4Fe-4S cluster, can transfer this cluster to apoproteins, and thereby intervenes in the maturation of Fe/S proteins. Could also act as a scaffold/chaperone for damaged Fe/S proteins. The polypeptide is Fe/S biogenesis protein NfuA (Teredinibacter turnerae (strain ATCC 39867 / T7901)).